Reading from the N-terminus, the 531-residue chain is MRGRALVLVAALLLQLLLLAAAGGAGAAATERKAHNYEDALRKSLLYFEAQRSGRLPHNQRVAWRDHSGLTDGLEQGVDLVGGYYDAGDHVKFGLPMAFTVTMLSWSMIEYGDDVEAAGELGHALEAIKWGTDYFIKAHTKPNELWAEVGDGDTDHYCWQRPEDMTTSRQAYKVDRERPGSDVAGETAAAMAAASIVFRKSNPHYASLLLHHAQQLFEFADKYRGKYDSSIAEVKSYYASVSGYKDELLWAALWLHRATGKAHYLDYVVDNADCFGGTGWAITEFSWDVKYAGVQILAARLLLRGEHEERHRSTLEQYRAKAEHYVCGCLGRNADGGADANVERSPGGMLYVRQWNNMQYVTNAAFLLAAYADYLGDDADGAVSCAGGETAGAGEVAALARAQVDYVLGTNPRGISYLVGYGAKYPNRVHHRAASIVPYKHSKEFIGCTQGFDHWFGRRSSNPNVLVGAIVGGPDRRDRFRDNRENYMQTEACTYNTAPMVGMFAKLNRMARQEREQEEVAAPARSTAADV.

An N-terminal signal peptide occupies residues 1–27 (MRGRALVLVAALLLQLLLLAAAGGAGA). The active-site Nucleophile is Asp89. Residues His430, Asp482, and Glu491 contribute to the active site.

Belongs to the glycosyl hydrolase 9 (cellulase E) family. In terms of tissue distribution, ubiquitous.

Its subcellular location is the secreted. The catalysed reaction is Endohydrolysis of (1-&gt;4)-beta-D-glucosidic linkages in cellulose, lichenin and cereal beta-D-glucans.. This chain is Endoglucanase 7 (GLU10), found in Oryza sativa subsp. japonica (Rice).